The chain runs to 137 residues: Large ribosomal subunit protein uL16 (137 aa).

Belongs to the universal ribosomal protein uL16 family. As to quaternary structure, part of the 50S ribosomal subunit.

In terms of biological role, binds 23S rRNA and is also seen to make contacts with the A and possibly P site tRNAs. This is Large ribosomal subunit protein uL16 from Methylocella silvestris (strain DSM 15510 / CIP 108128 / LMG 27833 / NCIMB 13906 / BL2).